An 81-amino-acid chain; its full sequence is Large ribosomal subunit protein bL27 (81 aa).

Residues 1–11 (MATSKSGGSSK) are compositionally biased toward polar residues. A disordered region spans residues 1 to 24 (MATSKSGGSSKNGRDSISKRLGVK).

The protein belongs to the bacterial ribosomal protein bL27 family.

The polypeptide is Large ribosomal subunit protein bL27 (Borrelia duttonii (strain Ly)).